Consider the following 547-residue polypeptide: Auxin transporter-like protein 3 (547 aa).

At 1 to 74 (MASGSSGGGY…DAWFSCASNQ (74 aa)) the chain is on the cytoplasmic side. The helical transmembrane segment at 75-92 (VAQVLLTLPYSFAQLGMA) threads the bilayer. Over 93–94 (SG) the chain is Extracellular. Residues 95 to 115 (LLFQLFYGLLGSWTAYLISIL) traverse the membrane as a helical segment. Residues 116 to 151 (YLEYRTRKERDKVDFRNHVIQWFEVLDGLLGRHWRN) lie on the Cytoplasmic side of the membrane. A helical membrane pass occupies residues 152–172 (VGLAFNCTFLLFGSVIQLIGC). Residues 173–187 (ASNIYYINDHLDKRT) lie on the Extracellular side of the membrane. A helical membrane pass occupies residues 188-208 (WTYIFGACCATTVFIPSFHNY). At 209 to 211 (RIW) the chain is on the cytoplasmic side. The chain crosses the membrane as a helical span at residues 212–232 (SFLGLLMTTYTAWYIAVASLI). At 233 to 247 (HGQVEGVAHSGPTSI) the chain is on the extracellular side. Residues 248-268 (VLYFTGATNILYTFGGHAVTV) form a helical membrane-spanning segment. At 269-281 (EIMHAMWRPQKFK) the chain is on the cytoplasmic side. The helical transmembrane segment at 282–302 (AIYLLATVYVLTLTLPSASAA) threads the bilayer. Over 303–329 (YWAFGDALLTHSNALALLPRTPWRDAA) the chain is Extracellular. The helical transmembrane segment at 330 to 350 (VVLMLIHQFITFGFACTPLYF) threads the bilayer. Over 351–371 (VWEKLVGLHGCPSLCKRAAAR) the chain is Cytoplasmic. A helical transmembrane segment spans residues 372–392 (LPVVLPIWFLAIIFPFFGPIN). A topological domain (extracellular) is located at residue serine 393. Residues 394 to 414 (AVGSLLVSFTVYIIPSLAYMV) form a helical membrane-spanning segment. The Cytoplasmic segment spans residues 415–440 (TFRSPQSRQNAVERPPRFAGGWTGAY). A helical membrane pass occupies residues 441–461 (VINSFVVAWVLVVGFGFGGWA). The Extracellular portion of the chain corresponds to 462 to 547 (SITNFVHQVD…HHHRHHRHGL (86 aa)). Asparagine 509 carries an N-linked (GlcNAc...) asparagine glycan.

Belongs to the amino acid/polyamine transporter 2 family. Amino acid/auxin permease (AAAP) (TC 2.A.18.1) subfamily.

The protein localises to the cell membrane. In terms of biological role, carrier protein involved in proton-driven auxin influx. May mediate the formation of auxin gradient from developing leaves (site of auxin biosynthesis) to tips. The chain is Auxin transporter-like protein 3 from Oryza sativa subsp. japonica (Rice).